A 289-amino-acid chain; its full sequence is MRSQGGSFAVALLLLLLLTAAATAADAEPDVESSVSTLPPGADAPRRMVKRAPTSSFIGMRGKKEDEKDQRAADWMGPDPLDYADMDEDSIYYENGKRLKKAPMSFVGMRGKKYIPISNRLSDVLHQIEEQRMRENLLEDLFERLAAGDDSVGDVGKRAPTGFTGMRGKRPMSGDDDDNDAMELLQKRAPVNSFLGVRGKKDVSHQHYKRAALSEAYDVRGKKERYADFNSKFVAVRGKKSEQEAGLDTGDGDGDQQYLVRPWLYLWADNKRAPSGFQGMRGKRPALAE.

The signal sequence occupies residues 1-24 (MRSQGGSFAVALLLLLLLTAAATA). The propeptide occupies 25 to 49 (ADAEPDVESSVSTLPPGADAPRRMV). The disordered stretch occupies residues 28–80 (EPDVESSVSTLPPGADAPRRMVKRAPTSSFIGMRGKKEDEKDQRAADWMGPDP). Residue arginine 61 is modified to Arginine amide. A compositionally biased stretch (basic and acidic residues) spans 62–72 (GKKEDEKDQRA). An Asparagine amide modification is found at asparagine 95. Residue arginine 110 is modified to Arginine amide. Position 155 is a valine amide (valine 155). The segment at 156-175 (GKRAPTGFTGMRGKRPMSGD) is disordered. Arginine 167, arginine 198, arginine 237, and arginine 281 each carry arginine amide. Residues 285-289 (PALAE) constitute a propeptide that is removed on maturation.

Belongs to the tachykinin family.

The protein resides in the secreted. Tachykinins are active peptides which excite neurons, evoke behavioral responses, are potent vasodilators and secretagogues, and contract (directly or indirectly) many smooth muscles. Stimulates gut muscle contractions. This Drosophila pseudoobscura pseudoobscura (Fruit fly) protein is Tachykinins.